Consider the following 323-residue polypeptide: Elongation factor P--(R)-beta-lysine ligase (323 aa).

Serine 74–glutamate 76 contacts substrate. ATP-binding positions include arginine 98 to glutamate 100 and asparagine 107. Residue tyrosine 116 coordinates substrate. Residue glutamate 242 to leucine 243 participates in ATP binding. Glutamate 249 contributes to the substrate binding site. Glycine 298 lines the ATP pocket.

Belongs to the class-II aminoacyl-tRNA synthetase family. EpmA subfamily. Homodimer.

It catalyses the reaction D-beta-lysine + L-lysyl-[protein] + ATP = N(6)-((3R)-3,6-diaminohexanoyl)-L-lysyl-[protein] + AMP + diphosphate + H(+). Its function is as follows. With EpmB is involved in the beta-lysylation step of the post-translational modification of translation elongation factor P (EF-P). Catalyzes the ATP-dependent activation of (R)-beta-lysine produced by EpmB, forming a lysyl-adenylate, from which the beta-lysyl moiety is then transferred to the epsilon-amino group of a conserved specific lysine residue in EF-P. The protein is Elongation factor P--(R)-beta-lysine ligase of Vibrio parahaemolyticus serotype O3:K6 (strain RIMD 2210633).